A 67-amino-acid polypeptide reads, in one-letter code: Colostrum trypsin inhibitor (67 aa).

The BPTI/Kunitz inhibitor domain maps to 8-58; that stretch reads CQLPQARGPCKAALLRYFYNSTSNACEPFTYGGCQGNNBNFETTEMCLRIC. 3 disulfide bridges follow: Cys8/Cys58, Cys17/Cys41, and Cys33/Cys54. A glycan (N-linked (GlcNAc...) asparagine) is linked at Asn27.

It localises to the secreted. The sequence is that of Colostrum trypsin inhibitor from Bos taurus (Bovine).